A 100-amino-acid chain; its full sequence is Urease subunit gamma (100 aa).

This sequence belongs to the urease gamma subunit family. As to quaternary structure, heterotrimer of UreA (gamma), UreB (beta) and UreC (alpha) subunits. Three heterotrimers associate to form the active enzyme.

The protein localises to the cytoplasm. It catalyses the reaction urea + 2 H2O + H(+) = hydrogencarbonate + 2 NH4(+). Its pathway is nitrogen metabolism; urea degradation; CO(2) and NH(3) from urea (urease route): step 1/1. This Burkholderia ambifaria (strain MC40-6) protein is Urease subunit gamma.